Reading from the N-terminus, the 166-residue chain is Small ribosomal subunit protein uS5 (166 aa).

The S5 DRBM domain occupies 11 to 74 (LQEKLIAVNR…EQAKRNLSKV (64 aa)).

Belongs to the universal ribosomal protein uS5 family. As to quaternary structure, part of the 30S ribosomal subunit. Contacts proteins S4 and S8.

Its function is as follows. With S4 and S12 plays an important role in translational accuracy. Located at the back of the 30S subunit body where it stabilizes the conformation of the head with respect to the body. The polypeptide is Small ribosomal subunit protein uS5 (Aeromonas salmonicida (strain A449)).